A 275-amino-acid polypeptide reads, in one-letter code: Large ribosomal subunit protein uL2cz/uL2cy (275 aa).

2 disordered regions span residues 1-26 and 224-275; these read MAIH…VKSN and MNPV…RRTK. The segment covering 7–26 has biased composition (polar residues); sequence KTSTPSTRNGTVDSRQVKSN.

This sequence belongs to the universal ribosomal protein uL2 family. Part of the 50S ribosomal subunit.

The protein localises to the plastid. Its subcellular location is the chloroplast. The sequence is that of Large ribosomal subunit protein uL2cz/uL2cy (rpl2-A) from Phaseolus angularis (Azuki bean).